Here is a 239-residue protein sequence, read N- to C-terminus: Ribosomal RNA small subunit methyltransferase G (239 aa).

S-adenosyl-L-methionine-binding positions include Gly78, Phe83, 129-130 (AE), and Arg148.

Belongs to the methyltransferase superfamily. RNA methyltransferase RsmG family.

It localises to the cytoplasm. Its function is as follows. Specifically methylates the N7 position of a guanine in 16S rRNA. This is Ribosomal RNA small subunit methyltransferase G from Clostridium perfringens (strain SM101 / Type A).